Reading from the N-terminus, the 335-residue chain is tRNA N6-adenosine threonylcarbamoyltransferase (335 aa).

Residues H111 and H115 each coordinate Fe cation. Residues I133–G137, D166, G179, D183, and N268 each bind substrate. D296 is a binding site for Fe cation.

It belongs to the KAE1 / TsaD family. The cofactor is Fe(2+).

It localises to the cytoplasm. It carries out the reaction L-threonylcarbamoyladenylate + adenosine(37) in tRNA = N(6)-L-threonylcarbamoyladenosine(37) in tRNA + AMP + H(+). Functionally, required for the formation of a threonylcarbamoyl group on adenosine at position 37 (t(6)A37) in tRNAs that read codons beginning with adenine. Is involved in the transfer of the threonylcarbamoyl moiety of threonylcarbamoyl-AMP (TC-AMP) to the N6 group of A37, together with TsaE and TsaB. TsaD likely plays a direct catalytic role in this reaction. In Aquifex aeolicus (strain VF5), this protein is tRNA N6-adenosine threonylcarbamoyltransferase.